The chain runs to 156 residues: Putative pre-16S rRNA nuclease (156 aa).

The protein belongs to the YqgF nuclease family.

It is found in the cytoplasm. In terms of biological role, could be a nuclease involved in processing of the 5'-end of pre-16S rRNA. The protein is Putative pre-16S rRNA nuclease of Aromatoleum aromaticum (strain DSM 19018 / LMG 30748 / EbN1) (Azoarcus sp. (strain EbN1)).